The chain runs to 212 residues: Large ribosomal subunit protein uL3 (212 aa).

An N5-methylglutamine modification is found at Q153.

The protein belongs to the universal ribosomal protein uL3 family. As to quaternary structure, part of the 50S ribosomal subunit. Forms a cluster with proteins L14 and L19. Post-translationally, methylated by PrmB.

In terms of biological role, one of the primary rRNA binding proteins, it binds directly near the 3'-end of the 23S rRNA, where it nucleates assembly of the 50S subunit. The sequence is that of Large ribosomal subunit protein uL3 from Shewanella pealeana (strain ATCC 700345 / ANG-SQ1).